A 346-amino-acid polypeptide reads, in one-letter code: MASLGRQVPEWHRLLALSWACLVRQTPHLREQKQMSPSLSCKLTTVPGRGSFQEFSSITPQKYMQEPENRTRLVQCLHEEQKPCVDPESLEPEKVIRSLQDMGFAEAHIHSLFSIQPSVHPQQLLGIVSELLLLGLNPEPVFNALKKNPQLLKLSSMQMKRRSSYLRKLGLGEGKLKRVLSVCPEVFTMHQRDIDRVVKVLREKCLFTAQHITDVLHRCPTVLQEDPNELEYKFQYAYFRMGLTHLDIVRTNFLQYSITKIKQRHIYLERLGRYQTPDKKGQTQIPNPSLRNILRVSEAEFLARTACSSVEEFQVFKKLLDQEEEEESESHASEEEEEEEEEEELL.

Residues 1–42 constitute a mitochondrion transit peptide; sequence MASLGRQVPEWHRLLALSWACLVRQTPHLREQKQMSPSLSCK. MTERF repeat units follow at residues 142 to 172, 177 to 204, 209 to 239, 245 to 270, and 290 to 318; these read FNALKKNPQLLKLSSMQMKRRSSYLRKLGLG, KRVLSVCPEVFTMHQRDIDRVVKVLREK, AQHITDVLHRCPTVLQEDPNELEYKFQYAYF, HLDIVRTNFLQYSITKIKQRHIYLER, and LRNILRVSEAEFLARTACSSVEEFQVFKK. The tract at residues 310–327 is dimerization with NSUN4; sequence VEEFQVFKKLLDQEEEEE. Residues 321–346 form a disordered region; sequence DQEEEEESESHASEEEEEEEEEEELL. Positions 322-346 are enriched in acidic residues; that stretch reads QEEEEESESHASEEEEEEEEEEELL.

It belongs to the mTERF family. Heterodimer with NSUN4; this interaction may be required for NSUN4 recruitment to the mitochondrial large ribosomal subunit. Widely expressed, with highest levels in liver, followed by testis, kidney and brain.

The protein localises to the mitochondrion. Its function is as follows. Regulator of mitochondrial ribosome biogenesis and translation. Binds to mitochondrial ribosomal RNAs 16S, 12S and 7S. Targets NSUN4 RNA methyltransferase to the mitochondrial large ribosomal subunit. This chain is Transcription termination factor 4, mitochondrial (Mterf4), found in Mus musculus (Mouse).